The following is a 350-amino-acid chain: Transcription factor MYB102 (350 aa).

2 consecutive HTH myb-type domains span residues 9 to 65 and 66 to 116; these read KNGL…RPDI and KRGR…RKKL. 2 DNA-binding regions (H-T-H motif) span residues 37-61 and 89-112; these read WRTLPKNAGLQRCGKSCRLRWTNYL and WSAIAARLPGRTDNEIKNFWNTHI.

Expressed in rosette leaves, cauline leaves and flowers.

The protein localises to the nucleus. Its function is as follows. Probable transcription factor that may function in osmotic stress and wounding signaling pathways. Contributes to basal resistance against the herbivore Pieris rapae (white cabbage butterfly) feeding. This Arabidopsis thaliana (Mouse-ear cress) protein is Transcription factor MYB102.